Here is a 435-residue protein sequence, read N- to C-terminus: 5-hydroxybenzimidazole synthase (435 aa).

Residues Met-95, Tyr-124, His-163, 186–188 (SKG), 227–230 (NGLR), and Glu-266 each bind substrate. His-270 contributes to the Zn(2+) binding site. Residue Tyr-293 participates in substrate binding. His-334 lines the Zn(2+) pocket. Positions 410, 413, and 417 each coordinate [4Fe-4S] cluster.

This sequence belongs to the ThiC family. 5-hydroxybenzimidazole synthase subfamily. Homodimer. Requires [4Fe-4S] cluster as cofactor.

It carries out the reaction 5-amino-1-(5-phospho-beta-D-ribosyl)imidazole + AH2 + S-adenosyl-L-methionine = 5-hydroxybenzimidazole + 5'-deoxyadenosine + formate + L-methionine + A + NH4(+) + phosphate + 2 H(+). In terms of biological role, catalyzes the conversion of aminoimidazole ribotide (AIR) to 5-hydroxybenzimidazole (5-HBI) in a radical S-adenosyl-L-methionine (SAM)-dependent reaction. Is thus involved in the anaerobic biosynthesis of the benzimidazole lower axial ligand of the cobamide produced by G.metallireducens. The polypeptide is 5-hydroxybenzimidazole synthase (Geobacter metallireducens (strain ATCC 53774 / DSM 7210 / GS-15)).